The following is a 553-amino-acid chain: Putative transport protein YidE (553 aa).

A run of 5 helical transmembrane segments spans residues 4–24, 28–48, 65–85, 95–115, and 158–178; these read IALTVSILALVAVVGLFIGNV, GIGLGIGGVLFGGIIVGHFVS, FGLILFVYTIGIQVGPGFFAS, LFAVLIVIIGGLVTAILHKLF, and MSYAMAYPFGICGILFTMWML. 2 RCK C-terminal domains span residues 191-276 and 279-361; these read QQHE…VIGQ and DTSL…VLGN. The next 6 helical transmembrane spans lie at 371 to 391, 393 to 413, 439 to 459, 464 to 484, 493 to 513, and 533 to 553; these read MLPVFIGIGLGVLLGSIPVFV, GFPAALKLGLAGGPLIMALIL, IVLFLSVVGLKSGGDFVNTLV, LSWIGYGALITAVPLITVGIL, YLTMCGMLAGSMTDPPALAFA, and LVMFLRIITPQLLAVLFWSIG.

The protein belongs to the AAE transporter (TC 2.A.81) family. YidE subfamily.

The protein localises to the cell membrane. The protein is Putative transport protein YidE of Escherichia coli O7:K1 (strain IAI39 / ExPEC).